A 439-amino-acid polypeptide reads, in one-letter code: MGSTCIAMAPRTLLLLIGCQLVFGFNEPLNIVSHLNDDWFLFGDSRSDCTYVENNGHPKLDWLDLDPKLCNSGKISAKSGNSLFRSFHFTDFYNYTGEGDQIVFYEGVNFSPNHGFKCLAYGDNKRWMGNKARFYARVYEKMAQYRSLSFVNVPYAYGGKAKPTSICKHKTLTLNNPTFISKESNYVDYYYESEANFTLAGCDEFIVPLCVFNGHSKGSSSDPANKYYMDSQSYYNMDTGVLYGFNSTLDVGNTAKDPGLDLTCRYLALTPGNYKAVSLEYLLSLPSKAICLRKPKRFMPVQVVDSRWNSTRQSDNMTAVACQLPYCFFRNTSADYSGGTHDVHHGDFHFRQLLSGLLLNVSCIAQQGAFLYNNVSSSWPAYGYGQCPTAANIGYMAPVCIYDPLPVVLLGVLLGIAVLIIVFLILYFMTDSGVRLHEA.

The signal sequence occupies residues 1 to 22; it reads MGSTCIAMAPRTLLLLIGCQLV. The tract at residues 12-132 is esterase domain 1; it reads TLLLLIGCQL…DNKRWMGNKA (121 aa). Over 23-407 the chain is Virion surface; that stretch reads FGFNEPLNIV…PVCIYDPLPV (385 aa). Ser-45 (nucleophile) is an active-site residue. The cysteines at positions 49 and 70 are disulfide-linked. Asn-94 carries N-linked (GlcNAc...) asparagine; by host glycosylation. The cysteines at positions 118 and 167 are disulfide-linked. The receptor binding stretch occupies residues 133–281; sequence RFYARVYEKM…GNYKAVSLEY (149 aa). N-linked (GlcNAc...) asparagine; by host glycosylation is found at Asn-196, Asn-246, Asn-309, and Asn-316. Disulfide bonds link Cys-202–Cys-291 and Cys-210–Cys-264. The tract at residues 282 to 395 is esterase domain 2; it reads LLSLPSKAIC…QCPTAANIGY (114 aa). Cys-322 and Cys-327 are joined by a disulfide. Residue Asn-331 is glycosylated (N-linked (GlcNAc...) asparagine; by host). Active-site charge relay system residues include Asp-342 and His-345. Asn-360 and Asn-374 each carry an N-linked (GlcNAc...) asparagine; by host glycan. Cysteines 363 and 387 form a disulfide. The chain crosses the membrane as a helical span at residues 408-428; sequence VLLGVLLGIAVLIIVFLILYF. At 429–439 the chain is on the intravirion side; the sequence is MTDSGVRLHEA.

This sequence belongs to the influenza type C/coronaviruses hemagglutinin-esterase family. As to quaternary structure, homodimer; disulfide-linked. Forms a complex with the M protein in the pre-Golgi. Associates then with S-M complex to form a ternary complex S-M-HE. In terms of processing, N-glycosylated in the host RER.

The protein localises to the virion membrane. Its subcellular location is the host cell membrane. The enzyme catalyses N-acetyl-9-O-acetylneuraminate + H2O = N-acetylneuraminate + acetate + H(+). The catalysed reaction is N-acetyl-4-O-acetylneuraminate + H2O = N-acetylneuraminate + acetate + H(+). Functionally, structural protein that makes short spikes at the surface of the virus. Contains receptor binding and receptor-destroying activities. Mediates de-O-acetylation of N-acetyl-4-O-acetylneuraminic acid, which is probably the receptor determinant recognized by the virus on the surface of erythrocytes and susceptible cells. This receptor-destroying activity is important for virus release as it probably helps preventing self-aggregation and ensures the efficient spread of the progeny virus from cell to cell. May serve as a secondary viral attachment protein for initiating infection, the spike protein being the major one. May become a target for both the humoral and the cellular branches of the immune system. The sequence is that of Hemagglutinin-esterase from Murine coronavirus (strain JHM) (MHV-JHM).